The following is a 250-amino-acid chain: AA9 family lytic polysaccharide monooxygenase F (250 aa).

The first 18 residues, 1–18 (MHLKTFSNLLVFVATVAA), serve as a signal peptide directing secretion. Histidine 19 contacts Cu(2+). N-linked (GlcNAc...) asparagine glycans are attached at residues asparagine 24 and asparagine 85. 2 cysteine pairs are disulfide-bonded: cysteine 70–cysteine 199 and cysteine 169–cysteine 250. Cu(2+) is bound at residue histidine 108. Asparagine 146 carries N-linked (GlcNAc...) asparagine glycosylation. Positions 185 and 194 each coordinate O2. Tyrosine 196 lines the Cu(2+) pocket.

This sequence belongs to the polysaccharide monooxygenase AA9 family. The cofactor is Cu(2+).

It is found in the secreted. It catalyses the reaction [(1-&gt;4)-beta-D-glucosyl]n+m + reduced acceptor + O2 = 4-dehydro-beta-D-glucosyl-[(1-&gt;4)-beta-D-glucosyl]n-1 + [(1-&gt;4)-beta-D-glucosyl]m + acceptor + H2O.. Functionally, lytic polysaccharide monooxygenase (LPMO) that depolymerizes crystalline and amorphous polysaccharides via the oxidation of scissile alpha- or beta-(1-4)-glycosidic bonds, yielding C1 and C4 oxidation products. Catalysis by LPMOs requires the reduction of the active-site copper from Cu(II) to Cu(I) by a reducing agent and H(2)O(2) or O(2) as a cosubstrate. This is AA9 family lytic polysaccharide monooxygenase F from Botryotinia fuckeliana (strain B05.10) (Noble rot fungus).